A 197-amino-acid chain; its full sequence is Holliday junction branch migration complex subunit RuvA (197 aa).

Positions 1–64 (MIGRISGLLL…EDAHLLFGFA (64 aa)) are domain I. Positions 65 to 142 (TEGERQAFRQ…DLGVSAIPGA (78 aa)) are domain II. The flexible linker stretch occupies residues 143–153 (AGARRPSTMGS). Residues 153–197 (SDVLNALLSLGYNDREANWAVSQLSVDLSVSDGIRQALKFLSKEK) form a domain III region.

This sequence belongs to the RuvA family. In terms of assembly, homotetramer. Forms an RuvA(8)-RuvB(12)-Holliday junction (HJ) complex. HJ DNA is sandwiched between 2 RuvA tetramers; dsDNA enters through RuvA and exits via RuvB. An RuvB hexamer assembles on each DNA strand where it exits the tetramer. Each RuvB hexamer is contacted by two RuvA subunits (via domain III) on 2 adjacent RuvB subunits; this complex drives branch migration. In the full resolvosome a probable DNA-RuvA(4)-RuvB(12)-RuvC(2) complex forms which resolves the HJ.

It is found in the cytoplasm. The RuvA-RuvB-RuvC complex processes Holliday junction (HJ) DNA during genetic recombination and DNA repair, while the RuvA-RuvB complex plays an important role in the rescue of blocked DNA replication forks via replication fork reversal (RFR). RuvA specifically binds to HJ cruciform DNA, conferring on it an open structure. The RuvB hexamer acts as an ATP-dependent pump, pulling dsDNA into and through the RuvAB complex. HJ branch migration allows RuvC to scan DNA until it finds its consensus sequence, where it cleaves and resolves the cruciform DNA. This is Holliday junction branch migration complex subunit RuvA from Nitrosospira multiformis (strain ATCC 25196 / NCIMB 11849 / C 71).